Consider the following 226-residue polypeptide: Peroxiredoxin-like 2C (226 aa).

The protein belongs to the peroxiredoxin-like PRXL2 family. PRXL2C subfamily. As to expression, expressed in gastric tissues.

Functionally, may positively regulate ERK1/2 signaling and AKT1 activation leading to HIF1A up-regulation with an increased expression of glycolysis genes and enhanced glycolysis. The polypeptide is Peroxiredoxin-like 2C (Homo sapiens (Human)).